Here is a 367-residue protein sequence, read N- to C-terminus: Calcium uniporter protein, mitochondrial (367 aa).

The N-terminal 12 residues, 1–12, are a transit peptide targeting the mitochondrion; it reads MAMPRVLCRVRL. The Mitochondrial matrix segment spans residues 13-232; it reads LIHNDFSVIS…LEEKKLELEQ (220 aa). The tract at residues 61-80 is disordered; it reads KQDASSSSSDSDSSDSDEDD. The stretch at 199 to 233 forms a coiled coil; sequence REHQLQKEVELTTQLETLQQELLPLEEKKLELEQV. The chain crosses the membrane as a helical span at residues 233-253; the sequence is VANRRSNWMAWAGLGLMSVQF. The Mitochondrial intermembrane portion of the chain corresponds to 254 to 262; the sequence is GILARLTWW. Residues 263-284 form a helical membrane-spanning segment; it reads EYSWDIMEPVTYFVTYGTAMAA. A Selectivity filter motif is present at residues 266–276; the sequence is WDIMEPVTYFV. Residue E270 participates in Ca(2+) binding. Residues 285-367 are Mitochondrial matrix-facing; it reads YAYFVLTREE…KKQVEEKAKE (83 aa).

It belongs to the MCU (TC 1.A.77) family. Homotetramer. Component of the uniplex complex, composed of MCU, EMRE, MICU1 and MICU2 in a 4:4:1:1 stoichiometry.

The protein localises to the mitochondrion inner membrane. It carries out the reaction Ca(2+)(in) = Ca(2+)(out). With respect to regulation, MCU channel activity is regulated by the heterodimer composed of MICU1 and MICU2, which act as calcium-sensors. At low calcium levels, MICU1 occludes the pore of the MCU channel, preventing mitochondrial calcium uptake. At higher calcium levels, calcium-binding to MICU1 and MICU2 induces a conformational change that weakens MCU-MICU1 interactions and moves the MICU1-MICU2 heterodimer away from the pore, allowing calcium permeation through the channel. Channel-forming and calcium-conducting subunit of the mitochondrial inner membrane calcium uniporter complex (uniplex), which mediates calcium uptake into the mitochondrial matrix. MCU channel activity is regulated by the calcium-sensor subunits of the uniplex MICU1 and MICU2. Mitochondrial calcium homeostasis plays key roles in cellular physiology and regulates ATP production, cytoplasmic calcium signals and activation of cell death pathways. This is Calcium uniporter protein, mitochondrial from Tribolium castaneum (Red flour beetle).